The chain runs to 344 residues: L-rhamnose-proton symporter (344 aa).

10 consecutive transmembrane segments (helical) span residues 4–24 (AIILGIIWHLVGAASAACFYA), 38–58 (WSIGGLVSWLILPWTVSYLLL), 68–88 (FSIATLLPVFLFGAMWGIGNI), 101–121 (MGIGIAIGITLIIGTLMTPIL), 137–157 (TLLGVFVALIGVAIVSYAGLL), 175–195 (LILAVMCGIFSAGMSFAMDAA), 207–227 (INSLYVALPSYVIIMGGGAII), 259–279 (ILFSALAGLMWYLQFFFYAWG), 290–310 (MSWMLHMSFYVLCGGIVGLLL), and 321–341 (VAVLCIGCLVIILAANIVGLG).

It belongs to the L-rhamnose transporter (TC 2.A.7.6) family.

The protein localises to the cell inner membrane. The catalysed reaction is L-rhamnopyranose(in) + H(+)(in) = L-rhamnopyranose(out) + H(+)(out). Its function is as follows. Uptake of L-rhamnose across the cytoplasmic membrane with the concomitant transport of protons into the cell (symport system). The chain is L-rhamnose-proton symporter from Yersinia pseudotuberculosis serotype O:1b (strain IP 31758).